Consider the following 340-residue polypeptide: Protein-arginine kinase (340 aa).

Positions 14–241 (IVLSSRIRLA…YQIINQEKLA (228 aa)) constitute a Phosphagen kinase C-terminal domain. ATP contacts are provided by residues 17–21 (SSRIR), R112, 163–167 (RASVM), and 194–199 (RGIYGE).

This sequence belongs to the ATP:guanido phosphotransferase family.

It catalyses the reaction L-arginyl-[protein] + ATP = N(omega)-phospho-L-arginyl-[protein] + ADP + H(+). Its function is as follows. Catalyzes the specific phosphorylation of arginine residues in proteins. The sequence is that of Protein-arginine kinase from Clostridium tetani (strain Massachusetts / E88).